A 151-amino-acid chain; its full sequence is MWSKLSISSKINRIRDPESDNTIEDTHVARVMRKYYMDKIGTLPEWLRPPGWQPPVNTGPTSPVSINASNAAPSNLKASYIPANPRRLSSSTSSASSPPLRRLPSVQHSTFDDLFEGVGSLQKSPSTTKPLSSTPSGSLLRSKFDHTRKKF.

Residues 48–151 are disordered; sequence RPPGWQPPVN…SKFDHTRKKF (104 aa). Polar residues predominate over residues 55 to 77; the sequence is PVNTGPTSPVSINASNAAPSNLK. Composition is skewed to low complexity over residues 85–105 and 123–141; these read PRRL…RLPS and KSPS…SLLR.

This is an uncharacterized protein from Schizosaccharomyces pombe (strain 972 / ATCC 24843) (Fission yeast).